The sequence spans 343 residues: Anthranilate phosphoribosyltransferase (343 aa).

Residues Gly78, 81–82 (GD), Thr86, 88–91 (NIST), 106–114 (KHGNRSVSS), and Ser118 contribute to the 5-phospho-alpha-D-ribose 1-diphosphate site. Gly78 is a binding site for anthranilate. Ser90 contributes to the Mg(2+) binding site. Asn109 lines the anthranilate pocket. Anthranilate is bound at residue Arg164. Residues Asp223 and Glu224 each contribute to the Mg(2+) site.

It belongs to the anthranilate phosphoribosyltransferase family. Homodimer. Mg(2+) is required as a cofactor.

It catalyses the reaction N-(5-phospho-beta-D-ribosyl)anthranilate + diphosphate = 5-phospho-alpha-D-ribose 1-diphosphate + anthranilate. It participates in amino-acid biosynthesis; L-tryptophan biosynthesis; L-tryptophan from chorismate: step 2/5. In terms of biological role, catalyzes the transfer of the phosphoribosyl group of 5-phosphorylribose-1-pyrophosphate (PRPP) to anthranilate to yield N-(5'-phosphoribosyl)-anthranilate (PRA). This Chlamydia felis (strain Fe/C-56) (Chlamydophila felis) protein is Anthranilate phosphoribosyltransferase.